We begin with the raw amino-acid sequence, 600 residues long: Alpha pinene synthase, chloroplastic (600 aa).

The tract at residues 1-27 (MSSISMHAGPLNISAANNHHPSWDRRV) is disordered. The transit peptide at 1–31 (MSSISMHAGPLNISAANNHHPSWDRRVSKPR) directs the protein to the chloroplast. Residues D354, D358, D498, and E506 each contribute to the Mg(2+) site. Residues 354 to 358 (DDVYD) carry the DDXXD motif motif.

It belongs to the terpene synthase family. Tpsa subfamily. Requires Mg(2+) as cofactor. It depends on Mn(2+) as a cofactor. Expressed at low levels in leaves.

It localises to the plastid. Its subcellular location is the chloroplast. The catalysed reaction is (2E)-geranyl diphosphate = alpha-pinene + diphosphate. The protein operates within secondary metabolite biosynthesis; terpenoid biosynthesis. In terms of biological role, monoterpene synthase involved in the biosynthesis of volatile compounds widely used in aromatherapy and folk medicine, and present in culinary herbs. Mediates the conversion of (2E)-geranyl diphosphate (GPP) into alpha-pinene and, as minor compounds, into alpha-phellandrene, limonene and alpha-terpinolene. The protein is Alpha pinene synthase, chloroplastic of Lavandula viridis (Green lavender).